The chain runs to 177 residues: ATP synthase subunit delta (177 aa).

It belongs to the ATPase delta chain family. In terms of assembly, F-type ATPases have 2 components, F(1) - the catalytic core - and F(0) - the membrane proton channel. F(1) has five subunits: alpha(3), beta(3), gamma(1), delta(1), epsilon(1). F(0) has three main subunits: a(1), b(2) and c(10-14). The alpha and beta chains form an alternating ring which encloses part of the gamma chain. F(1) is attached to F(0) by a central stalk formed by the gamma and epsilon chains, while a peripheral stalk is formed by the delta and b chains.

The protein resides in the cell inner membrane. Its function is as follows. F(1)F(0) ATP synthase produces ATP from ADP in the presence of a proton or sodium gradient. F-type ATPases consist of two structural domains, F(1) containing the extramembraneous catalytic core and F(0) containing the membrane proton channel, linked together by a central stalk and a peripheral stalk. During catalysis, ATP synthesis in the catalytic domain of F(1) is coupled via a rotary mechanism of the central stalk subunits to proton translocation. In terms of biological role, this protein is part of the stalk that links CF(0) to CF(1). It either transmits conformational changes from CF(0) to CF(1) or is implicated in proton conduction. The protein is ATP synthase subunit delta of Enterobacter sp. (strain 638).